The primary structure comprises 239 residues: U2 small nuclear ribonucleoprotein A' (239 aa).

4 LRR repeats span residues 19–40, 42–63, 64–85, and 88–109; these read KETELDLRWYQIPIIENLGVLR, VHDAIDFTDNDIRYLGNFPRMK, RLQTLLCGNNRITAIAPDIGKV, and NLKTLSLAQNHLQEIADLDPLA. An LRRCT domain is found at 122–160; it reads NPVAQKQYYRLYLIWRIPSLHILDFERVRRNERLRAEEV.

This sequence belongs to the U2 small nuclear ribonucleoprotein A family. Belongs to the 40S cdc5-associated complex (or cwf complex), a spliceosome sub-complex reminiscent of a late-stage spliceosome composed of the U2, U5 and U6 snRNAs and at least brr2, cdc5, cwf2/prp3, cwf3/syf1, cwf4/syf3, cwf5/ecm2, spp42/cwf6, cwf7/spf27, cwf8, cwf9, cwf10, cwf11, cwf12, prp45/cwf13, cwf14, cwf15, cwf16, cwf17, cwf18, cwf19, cwf20, cwf21, cwf22, cwf23, cwf24, cwf25, cwf26, cyp7/cwf27, cwf28, cwf29/ist3, lea1, msl1, prp5/cwf1, prp10, prp12/sap130, prp17, prp22, sap61, sap62, sap114, sap145, slu7, smb1, smd1, smd3, smf1, smg1 and syf2.

It localises to the nucleus. Involved in pre-mRNA splicing. This protein is associated with sn-RNP U2. It helps the A' protein to bind stem loop IV of U2 snRNA. This is U2 small nuclear ribonucleoprotein A' (lea1) from Schizosaccharomyces pombe (strain 972 / ATCC 24843) (Fission yeast).